Consider the following 302-residue polypeptide: Sulfate adenylyltransferase subunit 2 (302 aa).

It belongs to the PAPS reductase family. CysD subfamily. In terms of assembly, heterodimer composed of CysD, the smaller subunit, and CysN.

It carries out the reaction sulfate + ATP + H(+) = adenosine 5'-phosphosulfate + diphosphate. It participates in sulfur metabolism; hydrogen sulfide biosynthesis; sulfite from sulfate: step 1/3. Its function is as follows. With CysN forms the ATP sulfurylase (ATPS) that catalyzes the adenylation of sulfate producing adenosine 5'-phosphosulfate (APS) and diphosphate, the first enzymatic step in sulfur assimilation pathway. APS synthesis involves the formation of a high-energy phosphoric-sulfuric acid anhydride bond driven by GTP hydrolysis by CysN coupled to ATP hydrolysis by CysD. The polypeptide is Sulfate adenylyltransferase subunit 2 (Salmonella arizonae (strain ATCC BAA-731 / CDC346-86 / RSK2980)).